Consider the following 34-residue polypeptide: Calcitonin-like peptide 2 (34 aa).

Cysteines 2 and 7 form a disulfide. Phenylalanine 34 is subject to Phenylalanine amide.

This Odorrana schmackeri (Schmacker's frog) protein is Calcitonin-like peptide 2.